We begin with the raw amino-acid sequence, 288 residues long: Small ribosomal subunit protein uS2 (288 aa).

Belongs to the universal ribosomal protein uS2 family. Component of the small ribosomal subunit. Mature ribosomes consist of a small (40S) and a large (60S) subunit. The 40S subunit contains about 33 different proteins and 1 molecule of RNA (18S). The 60S subunit contains about 49 different proteins and 3 molecules of RNA (28S, 5.8S and 5S). Interacts with ribosomal protein S21.

Its subcellular location is the cytoplasm. Its function is as follows. Required for the assembly and/or stability of the 40S ribosomal subunit. Required for the processing of the 20S rRNA-precursor to mature 18S rRNA in a late step of the maturation of 40S ribosomal subunits. In Aedes aegypti (Yellowfever mosquito), this protein is Small ribosomal subunit protein uS2.